Here is a 1141-residue protein sequence, read N- to C-terminus: cGMP-inhibited 3',5'-cyclic phosphodiesterase 3A (1141 aa).

Positions 1-42 (MAVRGEAAQDLAKPGLGGASPARVARGNHRHRGESSPSPRGS) are disordered. The chain crosses the membrane as a helical span at residues 62–82 (SALCAGSLSVLLALLVRLVGG). The tract at residues 90 to 111 (KSQEAAAEEEEEEGARGGVFPG) is disordered. The next 5 membrane-spanning stretches (helical) occupy residues 127–147 (LQPAALLFSLLCAFFWMGLCL), 157–177 (AVALLAACCAGEALVQLSLGV), 182–202 (LLSLPAAGVLLSCLGGATWLV), 207–227 (LGVLMVAWTSVLRTVALVSLE), and 229–249 (FKVAWRPYLAYLAAVLGLLLA). At serine 310 the chain carries Phosphoserine. Residues 433–445 (RVSSTWTTTTSAT) are compositionally biased toward low complexity. The segment at 433–483 (RVSSTWTTTTSATGLPTLEPAPVRRDRSASIKPHEAPSPSAVNPDSWNAPG) is disordered. The segment covering 454-467 (PVRRDRSASIKPHE) has biased composition (basic and acidic residues). The span at 472-483 (SAVNPDSWNAPG) shows a compositional bias: polar residues. Serine 492, serine 520, serine 524, and serine 533 each carry phosphoserine. Residues 505–654 (VKAKKQNRPG…CQREPQRKAS (150 aa)) are disordered. The segment covering 522-532 (VPSPSSSPPQG) has biased composition (pro residues). A compositionally biased stretch (low complexity) spans 533 to 544 (SPASSPVSNSAS). Positions 618–637 (TSQVTSDYETNNNSDSSDIL) are enriched in polar residues. Residues 669–1141 (KPILAPEPLV…EETLAPQPDL (473 aa)) are interaction with SLFN12. Residues 674-1093 (PEPLVMDNLD…MMWKKVIEEE (420 aa)) form the PDEase domain. Histidine 752 acts as the Proton donor in catalysis. Histidine 752 lines the AMP pocket. Residues histidine 756, histidine 836, aspartate 837, and aspartate 950 each contribute to the Mn(2+) site. AMP is bound by residues aspartate 837, aspartate 950, and glutamine 1001. Aspartate 837 contacts Mg(2+). 2 disordered regions span residues 1024–1060 (GKWVDDSDDSGDTDDPEEEEEEAETPHEDEACESSIA) and 1120–1141 (KEEEEEKGKPRAEETLAPQPDL). Positions 1029–1046 (DSDDSGDTDDPEEEEEEA) are enriched in acidic residues. A Phosphoserine modification is found at serine 1033. The residue at position 1036 (threonine 1036) is a Phosphothreonine. Lysine 1120 participates in a covalent cross-link: Glycyl lysine isopeptide (Lys-Gly) (interchain with G-Cter in SUMO2).

It belongs to the cyclic nucleotide phosphodiesterase family. PDE3 subfamily. The cofactor is Mn(2+). It depends on Mg(2+) as a cofactor.

Its subcellular location is the membrane. The protein localises to the cytoplasm. The protein resides in the cytosol. It catalyses the reaction a nucleoside 3',5'-cyclic phosphate + H2O = a nucleoside 5'-phosphate + H(+). The enzyme catalyses 3',5'-cyclic AMP + H2O = AMP + H(+). The catalysed reaction is 3',5'-cyclic GMP + H2O = GMP + H(+). It carries out the reaction 3',5'-cyclic UMP + H2O = UMP + H(+). With respect to regulation, inhibited by cGMP. Its function is as follows. Cyclic nucleotide phosphodiesterase with specificity for the second messengers cAMP and cGMP, which are key regulators of many important physiological processes. Also has activity toward cUMP. Independently of its catalytic activity it is part of an E2/17beta-estradiol-induced pro-apoptotic signaling pathway. E2 stabilizes the PDE3A/SLFN12 complex in the cytosol, promoting the dephosphorylation of SLFN12 and activating its pro-apoptotic ribosomal RNA/rRNA ribonuclease activity. This apoptotic pathway might be relevant in tissues with high concentration of E2 and be for instance involved in placenta remodeling. This chain is cGMP-inhibited 3',5'-cyclic phosphodiesterase 3A, found in Mus musculus (Mouse).